Consider the following 230-residue polypeptide: MTRASLEKQPHEVASMFDGVAANYDLTNDVISLGQARLWRRAVAAAVDARPAQKILDLAAGTATSSQPFVKAGAYVVPCDFSLGMLKVGKERHPWMPFTAGDGMRLPFKDETFDTVTISFGLRNIQDTEVALRELYRVTKPGGRVVICEFSQPTWTPFRTVYTEYLMRAIPPAARAVSSNPDAYVYLAESIRDWPDQPALAALLQKAGWSKVAWRNLTGGVVALHRATRA.

S-adenosyl-L-methionine is bound by residues Thr-62, Asp-80, Asp-102 to Gly-103, and Ser-119.

This sequence belongs to the class I-like SAM-binding methyltransferase superfamily. MenG/UbiE family.

The enzyme catalyses a 2-demethylmenaquinol + S-adenosyl-L-methionine = a menaquinol + S-adenosyl-L-homocysteine + H(+). It participates in quinol/quinone metabolism; menaquinone biosynthesis; menaquinol from 1,4-dihydroxy-2-naphthoate: step 2/2. Its function is as follows. Methyltransferase required for the conversion of demethylmenaquinol (DMKH2) to menaquinol (MKH2). In Streptomyces griseus subsp. griseus (strain JCM 4626 / CBS 651.72 / NBRC 13350 / KCC S-0626 / ISP 5235), this protein is Demethylmenaquinone methyltransferase.